A 738-amino-acid chain; its full sequence is NAD(P)H-quinone oxidoreductase subunit 5, chloroplastic (738 aa).

Helical transmembrane passes span 9–29 (WIIPFVPLPVPMLIGVGLLLF), 40–60 (WAFPSILLLSIVMIFSINLSI), 89–109 (IDPLTSIMSMLITTVGIMVLI), 125–145 (FASMSFFSTSMLGLVTSSNLI), 147–167 (IYIFWELVGMCSYLLIGFWFT), 185–205 (GDFGLLLGILGFYWITGSFEF), 230–250 (AALLFTGAVAKSAQFPLHVWL), 258–278 (TPISALIHAATMVAAGIFLVA), 280–300 (LLPLFIVIPYIMNFISFIGII), 327–347 (LGYMMLALGMGSYRSALFHLI), 354–374 (ALLFLGSGSIIHSMETIVGYS), 396–416 (ISFLLGTLSLCGIPPLACFWS), 425–445 (WLYSPIFAIIAWSTAGLTAFY), 546–566 (LFPLLVLGILTLFVGSLGIPF), 603–623 (FSVSIAYFGIFIASFLYKPIY), and 718–738 (YLFFYLSCVSIFLLGLYFPVF).

Belongs to the complex I subunit 5 family. As to quaternary structure, NDH is composed of at least 16 different subunits, 5 of which are encoded in the nucleus.

The protein resides in the plastid. The protein localises to the chloroplast thylakoid membrane. The catalysed reaction is a plastoquinone + NADH + (n+1) H(+)(in) = a plastoquinol + NAD(+) + n H(+)(out). It catalyses the reaction a plastoquinone + NADPH + (n+1) H(+)(in) = a plastoquinol + NADP(+) + n H(+)(out). In terms of biological role, NDH shuttles electrons from NAD(P)H:plastoquinone, via FMN and iron-sulfur (Fe-S) centers, to quinones in the photosynthetic chain and possibly in a chloroplast respiratory chain. The immediate electron acceptor for the enzyme in this species is believed to be plastoquinone. Couples the redox reaction to proton translocation, and thus conserves the redox energy in a proton gradient. This chain is NAD(P)H-quinone oxidoreductase subunit 5, chloroplastic (ndhF), found in Ligustrum vulgare (Common privet).